The sequence spans 205 residues: Ribosomal RNA large subunit methyltransferase E (205 aa).

Positions 60, 62, 80, 96, and 121 each coordinate S-adenosyl-L-methionine. Catalysis depends on Lys161, which acts as the Proton acceptor.

It belongs to the class I-like SAM-binding methyltransferase superfamily. RNA methyltransferase RlmE family.

The protein localises to the cytoplasm. It carries out the reaction uridine(2552) in 23S rRNA + S-adenosyl-L-methionine = 2'-O-methyluridine(2552) in 23S rRNA + S-adenosyl-L-homocysteine + H(+). Functionally, specifically methylates the uridine in position 2552 of 23S rRNA at the 2'-O position of the ribose in the fully assembled 50S ribosomal subunit. In Chromobacterium violaceum (strain ATCC 12472 / DSM 30191 / JCM 1249 / CCUG 213 / NBRC 12614 / NCIMB 9131 / NCTC 9757 / MK), this protein is Ribosomal RNA large subunit methyltransferase E.